A 337-amino-acid polypeptide reads, in one-letter code: Dihydroorotate dehydrogenase (quinone) (337 aa).

Residues 62–66 (AGLDK) and Thr86 contribute to the FMN site. Substrate is bound at residue Lys66. Residue 111 to 115 (NRMGF) coordinates substrate. 2 residues coordinate FMN: Asn140 and Asn173. Asn173 is a substrate binding site. The active-site Nucleophile is the Ser176. A substrate-binding site is contributed by Asn178. Residues Lys218 and Thr246 each contribute to the FMN site. 247-248 (NT) contributes to the substrate binding site. Residues Gly269, Gly298, and 319 to 320 (YS) contribute to the FMN site.

This sequence belongs to the dihydroorotate dehydrogenase family. Type 2 subfamily. As to quaternary structure, monomer. FMN is required as a cofactor.

The protein localises to the cell membrane. The enzyme catalyses (S)-dihydroorotate + a quinone = orotate + a quinol. It participates in pyrimidine metabolism; UMP biosynthesis via de novo pathway; orotate from (S)-dihydroorotate (quinone route): step 1/1. Catalyzes the conversion of dihydroorotate to orotate with quinone as electron acceptor. This is Dihydroorotate dehydrogenase (quinone) from Wigglesworthia glossinidia brevipalpis.